Reading from the N-terminus, the 545-residue chain is Chaperonin GroEL (545 aa).

ATP contacts are provided by residues Thr30–Pro33, Lys51, Asp87–Thr91, Gly415, Asn479–Ala481, and Asp495.

The protein belongs to the chaperonin (HSP60) family. In terms of assembly, forms a cylinder of 14 subunits composed of two heptameric rings stacked back-to-back. Interacts with the co-chaperonin GroES.

It localises to the cytoplasm. The enzyme catalyses ATP + H2O + a folded polypeptide = ADP + phosphate + an unfolded polypeptide.. In terms of biological role, together with its co-chaperonin GroES, plays an essential role in assisting protein folding. The GroEL-GroES system forms a nano-cage that allows encapsulation of the non-native substrate proteins and provides a physical environment optimized to promote and accelerate protein folding. The protein is Chaperonin GroEL of Salmonella agona (strain SL483).